Reading from the N-terminus, the 408-residue chain is Menaquinone reductase (408 aa).

FAD-binding positions include 13–17, 46–49, Arg103, Ala127, Asp290, and 302–303; these read GAGPA, CGDG, and GI.

This sequence belongs to the geranylgeranyl reductase family. Requires FAD as cofactor.

It catalyses the reaction menaquinone-9 + AH2 = beta-dihydromenaquinone-9 + A. It participates in quinol/quinone metabolism; menaquinone biosynthesis. Functionally, catalyzes the reduction of a single double bond in the isoprenoid tail of menaquinone (MK-9) in M.tuberculosis, likely the beta-isoprene unit, forming the predominant form of menaquinone found in mycobacteria, MK-9(II-H2). This is Menaquinone reductase from Mycobacterium tuberculosis (strain CDC 1551 / Oshkosh).